The sequence spans 91 residues: Teretoxin Tan22.13 (91 aa).

A signal peptide spans 1-21 (MKVQILFALMMVLVTLCLGQK). Positions 22-24 (MQR) are excised as a propeptide.

This sequence belongs to the teretoxin C (TC) superfamily. Post-translationally, contains 4 disulfide bonds. In terms of tissue distribution, expressed by the venom duct.

It is found in the secreted. This Terebra anilis (Auger snail) protein is Teretoxin Tan22.13.